The primary structure comprises 317 residues: Protein KlaC (317 aa).

In terms of biological role, belongs to the kla operon, which is associated with cryptic tellurite resistance, and IncW plasmid fertility inhibition. The chain is Protein KlaC (klaC) from Escherichia coli.